Consider the following 509-residue polypeptide: Maturase K (509 aa).

It belongs to the intron maturase 2 family. MatK subfamily.

Its subcellular location is the plastid. It is found in the chloroplast. In terms of biological role, usually encoded in the trnK tRNA gene intron. Probably assists in splicing its own and other chloroplast group II introns. The polypeptide is Maturase K (Trifolium semipilosum (Kenya clover)).